Consider the following 257-residue polypeptide: Cobalt transport protein CbiM (257 aa).

An N-terminal signal peptide occupies residues 1–33 (MVKPTQAKRYASLGAIALLTTSLVVASPNPALA). 6 consecutive transmembrane segments (helical) span residues 39–59 (GFLP…FLAW), 74–94 (SVLL…LKIP), 117–137 (LMAV…AHGG), 138–158 (LTTL…LAWL), 171–191 (AIAL…LTSL), and 214–234 (LFAV…VLVW).

Belongs to the CbiM family. Forms an energy-coupling factor (ECF) transporter complex composed of an ATP-binding protein (A component, CbiO), a transmembrane protein (T component, CbiQ) and 2 possible substrate-capture proteins (S components, CbiM and CbiN) of unknown stoichimetry.

It is found in the cell inner membrane. Its pathway is cofactor biosynthesis; adenosylcobalamin biosynthesis. In terms of biological role, part of the energy-coupling factor (ECF) transporter complex CbiMNOQ involved in cobalt import. This chain is Cobalt transport protein CbiM, found in Thermosynechococcus vestitus (strain NIES-2133 / IAM M-273 / BP-1).